Here is an 874-residue protein sequence, read N- to C-terminus: Alanine--tRNA ligase (874 aa).

Zn(2+) contacts are provided by His-564, His-568, Cys-665, and His-669.

The protein belongs to the class-II aminoacyl-tRNA synthetase family. Requires Zn(2+) as cofactor.

It is found in the cytoplasm. It carries out the reaction tRNA(Ala) + L-alanine + ATP = L-alanyl-tRNA(Ala) + AMP + diphosphate. Catalyzes the attachment of alanine to tRNA(Ala) in a two-step reaction: alanine is first activated by ATP to form Ala-AMP and then transferred to the acceptor end of tRNA(Ala). Also edits incorrectly charged Ser-tRNA(Ala) and Gly-tRNA(Ala) via its editing domain. The chain is Alanine--tRNA ligase from Burkholderia pseudomallei (strain 1106a).